Here is a 142-residue protein sequence, read N- to C-terminus: Large ribosomal subunit protein uL13 (142 aa).

It belongs to the universal ribosomal protein uL13 family. In terms of assembly, part of the 50S ribosomal subunit.

Its function is as follows. This protein is one of the early assembly proteins of the 50S ribosomal subunit, although it is not seen to bind rRNA by itself. It is important during the early stages of 50S assembly. This chain is Large ribosomal subunit protein uL13, found in Thermococcus kodakarensis (strain ATCC BAA-918 / JCM 12380 / KOD1) (Pyrococcus kodakaraensis (strain KOD1)).